A 252-amino-acid chain; its full sequence is Hydroxyacylglutathione hydrolase (252 aa).

Zn(2+) contacts are provided by H54, H56, D58, H59, H113, D132, and H170.

The protein belongs to the metallo-beta-lactamase superfamily. Glyoxalase II family. Monomer. The cofactor is Zn(2+).

The enzyme catalyses an S-(2-hydroxyacyl)glutathione + H2O = a 2-hydroxy carboxylate + glutathione + H(+). The protein operates within secondary metabolite metabolism; methylglyoxal degradation; (R)-lactate from methylglyoxal: step 2/2. Functionally, thiolesterase that catalyzes the hydrolysis of S-D-lactoyl-glutathione to form glutathione and D-lactic acid. The chain is Hydroxyacylglutathione hydrolase from Synechococcus sp. (strain JA-2-3B'a(2-13)) (Cyanobacteria bacterium Yellowstone B-Prime).